The following is a 283-amino-acid chain: Non-selective voltage-gated ion channel VDAC3 (283 aa).

Position 2 is an N-acetylcysteine (C2). T4 bears the Phosphothreonine mark. N6-acetyllysine is present on residues K12, K15, and K20. The next 2 beta stranded transmembrane spans lie at 26-35 and 39-47; these read MVKIDLRTKS and VEFSTSGHA. K53 is covalently cross-linked (Glycyl lysine isopeptide (Lys-Gly) (interchain with G-Cter in ubiquitin)). A run of 3 beta stranded transmembrane segments spans residues 54–64, 69–76, and 80–89; these read ASGNLETKYKI, LTFTQKWN, and TLGTEISLEN. Position 90 is an N6-acetyllysine (K90). Residues 95 to 104 traverse the membrane as a beta stranded segment; sequence LKLTLDTIFV. Glycyl lysine isopeptide (Lys-Gly) (interchain with G-Cter in ubiquitin) cross-links involve residues K109 and K110. 10 beta stranded membrane-spanning segments follow: residues 111-120, 123-130, 137-145, 150-158, 163-175, 178-185, 189-198, 202-211, 218-227, and 231-238; these read SGKLKASYKR, FSIGSNVD, TIYGWAVLA, LAGYQMSFD, KLSQ…GYKA, FQLHTHVN, EFGGSIYQKV, IETSINLAWT, RFGIAAKYKL, and TSLSAKVN. S241 is subject to Phosphoserine. NAD(+) contacts are provided by residues 242 to 244 and 260 to 264; these read LIG and SALID. The next 2 beta stranded transmembrane spans lie at 242-251 and 254-263; these read LIGLGYTQTL and GVKLTLSALI. Residue K266 is modified to N6-acetyllysine; alternate. K266 participates in a covalent cross-link: Glycyl lysine isopeptide (Lys-Gly) (interchain with G-Cter in ubiquitin); alternate. Residues 273-282 form a beta stranded membrane-spanning segment; it reads HKVGLGFELE.

The protein belongs to the eukaryotic mitochondrial porin family. Interacts with ARMC12 in a TBC1D21-dependent manner. Interacts with MISFA. Ubiquitinated by PRKN during mitophagy, leading to its degradation and enhancement of mitophagy. Deubiquitinated by USP30.

It localises to the mitochondrion outer membrane. It is found in the membrane. The catalysed reaction is chloride(in) = chloride(out). It catalyses the reaction K(+)(in) = K(+)(out). Its function is as follows. Non-selective voltage-gated ion channel that mediates the transport of anions and cations through the mitochondrion outer membrane and plasma membrane. Forms a high-conducting channel with a stable open state and a voltage-induced closure with a mild preference for anions over cations. Involved in male fertility and sperm mitochondrial sheath formation. In Sus scrofa (Pig), this protein is Non-selective voltage-gated ion channel VDAC3.